The chain runs to 276 residues: NADPH-dependent 7-cyano-7-deazaguanine reductase (276 aa).

Isoleucine 83–serine 85 serves as a coordination point for substrate. An NADPH-binding site is contributed by serine 85–lysine 86. The Thioimide intermediate role is filled by cysteine 184. Catalysis depends on aspartate 191, which acts as the Proton donor. Histidine 223 to glutamate 224 provides a ligand contact to substrate. Arginine 252 to glycine 253 provides a ligand contact to NADPH.

Belongs to the GTP cyclohydrolase I family. QueF type 2 subfamily. Homodimer.

The protein resides in the cytoplasm. The enzyme catalyses 7-aminomethyl-7-carbaguanine + 2 NADP(+) = 7-cyano-7-deazaguanine + 2 NADPH + 3 H(+). The protein operates within tRNA modification; tRNA-queuosine biosynthesis. Its function is as follows. Catalyzes the NADPH-dependent reduction of 7-cyano-7-deazaguanine (preQ0) to 7-aminomethyl-7-deazaguanine (preQ1). In Pseudomonas aeruginosa (strain ATCC 15692 / DSM 22644 / CIP 104116 / JCM 14847 / LMG 12228 / 1C / PRS 101 / PAO1), this protein is NADPH-dependent 7-cyano-7-deazaguanine reductase.